Here is a 147-residue protein sequence, read N- to C-terminus: Hemoglobin subunit beta-3 (147 aa).

In terms of domain architecture, Globin spans 3 to 147; it reads HWTAEEKAVI…LVDALSHSYH (145 aa). The heme b site is built by H64 and H93.

It belongs to the globin family. Heterotetramer of two alpha chains and two beta chains. Red blood cells.

This is a tadpole (larval) beta chain. This is Hemoglobin subunit beta-3 from Aquarana catesbeiana (American bullfrog).